Reading from the N-terminus, the 490-residue chain is Protein nucleotidyltransferase YdiU (490 aa).

Gly94, Gly96, Arg97, Lys117, Asp129, Gly130, Arg180, and Arg187 together coordinate ATP. Asp256 serves as the catalytic Proton acceptor. 2 residues coordinate Mg(2+): Asn257 and Asp266. Position 266 (Asp266) interacts with ATP.

It belongs to the SELO family. Mg(2+) serves as cofactor. It depends on Mn(2+) as a cofactor.

It carries out the reaction L-seryl-[protein] + ATP = 3-O-(5'-adenylyl)-L-seryl-[protein] + diphosphate. It catalyses the reaction L-threonyl-[protein] + ATP = 3-O-(5'-adenylyl)-L-threonyl-[protein] + diphosphate. The catalysed reaction is L-tyrosyl-[protein] + ATP = O-(5'-adenylyl)-L-tyrosyl-[protein] + diphosphate. The enzyme catalyses L-histidyl-[protein] + UTP = N(tele)-(5'-uridylyl)-L-histidyl-[protein] + diphosphate. It carries out the reaction L-seryl-[protein] + UTP = O-(5'-uridylyl)-L-seryl-[protein] + diphosphate. It catalyses the reaction L-tyrosyl-[protein] + UTP = O-(5'-uridylyl)-L-tyrosyl-[protein] + diphosphate. In terms of biological role, nucleotidyltransferase involved in the post-translational modification of proteins. It can catalyze the addition of adenosine monophosphate (AMP) or uridine monophosphate (UMP) to a protein, resulting in modifications known as AMPylation and UMPylation. This chain is Protein nucleotidyltransferase YdiU, found in Clostridium perfringens (strain ATCC 13124 / DSM 756 / JCM 1290 / NCIMB 6125 / NCTC 8237 / Type A).